We begin with the raw amino-acid sequence, 125 residues long: MADLAKLVDDLSSLTVLEAADLAKMLEEKWGVSAAAAVAVAAGPAAGGAAAAVEEQTEFTVVLASAGDKKIEVIKEVRAITGLGLKEAKDLVEGAPKPVKEGVAKDEAEKLKAQLEKAGAKIELK.

It belongs to the bacterial ribosomal protein bL12 family. As to quaternary structure, homodimer. Part of the ribosomal stalk of the 50S ribosomal subunit. Forms a multimeric L10(L12)X complex, where L10 forms an elongated spine to which 2 to 4 L12 dimers bind in a sequential fashion. Binds GTP-bound translation factors.

Its function is as follows. Forms part of the ribosomal stalk which helps the ribosome interact with GTP-bound translation factors. Is thus essential for accurate translation. This is Large ribosomal subunit protein bL12 from Methylobacterium radiotolerans (strain ATCC 27329 / DSM 1819 / JCM 2831 / NBRC 15690 / NCIMB 10815 / 0-1).